The following is a 465-amino-acid chain: Adenosylhomocysteinase (465 aa).

Substrate-binding residues include Thr-56, Asp-131, and Glu-191. NAD(+) is bound at residue 192 to 194; the sequence is TTT. Residues Lys-221 and Asp-225 each coordinate substrate. NAD(+)-binding positions include Asn-226, 255 to 260, Glu-278, Asn-313, 334 to 336, and Asn-379; these read GYGDVG and IGH.

This sequence belongs to the adenosylhomocysteinase family. Requires NAD(+) as cofactor.

Its subcellular location is the cytoplasm. It catalyses the reaction S-adenosyl-L-homocysteine + H2O = L-homocysteine + adenosine. Its pathway is amino-acid biosynthesis; L-homocysteine biosynthesis; L-homocysteine from S-adenosyl-L-homocysteine: step 1/1. Its function is as follows. May play a key role in the regulation of the intracellular concentration of adenosylhomocysteine. The chain is Adenosylhomocysteinase from Bartonella tribocorum (strain CIP 105476 / IBS 506).